The chain runs to 151 residues: Transcriptional regulator MraZ (151 aa).

2 consecutive SpoVT-AbrB domains span residues 5–52 and 81–124; these read IHQV…PLSE and ATDL…SQEE.

It belongs to the MraZ family. In terms of assembly, forms oligomers.

It is found in the cytoplasm. It localises to the nucleoid. This is Transcriptional regulator MraZ from Marinomonas sp. (strain MWYL1).